Consider the following 132-residue polypeptide: Fatty acid-binding protein 1 (132 aa).

An N-acetylalanine modification is found at Ala-2.

The protein belongs to the calycin superfamily. Fatty-acid binding protein (FABP) family.

This chain is Fatty acid-binding protein 1 (FABP-1), found in Fasciola gigantica (Giant liver fluke).